The chain runs to 201 residues: Glycerol-3-phosphate acyltransferase (201 aa).

Transmembrane regions (helical) follow at residues 4–24 (IASL…LVSL), 84–104 (EIAM…FLAF), 116–136 (VLLA…LAVA), and 157–177 (AWFI…LLLV).

It belongs to the PlsY family. Probably interacts with PlsX.

The protein localises to the cell inner membrane. The enzyme catalyses an acyl phosphate + sn-glycerol 3-phosphate = a 1-acyl-sn-glycero-3-phosphate + phosphate. It functions in the pathway lipid metabolism; phospholipid metabolism. Its function is as follows. Catalyzes the transfer of an acyl group from acyl-phosphate (acyl-PO(4)) to glycerol-3-phosphate (G3P) to form lysophosphatidic acid (LPA). This enzyme utilizes acyl-phosphate as fatty acyl donor, but not acyl-CoA or acyl-ACP. The sequence is that of Glycerol-3-phosphate acyltransferase from Laribacter hongkongensis (strain HLHK9).